The following is a 139-amino-acid chain: Small ribosomal subunit protein uS12m (139 aa).

The disordered stretch occupies residues 1–21 (MLSTLYQNDLKKKRNRRRNRS). Residues 11 to 20 (KKKRNRRRNR) are compositionally biased toward basic residues.

This sequence belongs to the universal ribosomal protein uS12 family.

It localises to the mitochondrion. In terms of biological role, protein S12 is involved in the translation initiation step. The chain is Small ribosomal subunit protein uS12m (RPS12) from Paramecium tetraurelia.